The following is a 331-amino-acid chain: 6-phosphogluconolactonase (331 aa).

An N6-acetyllysine modification is found at lysine 287.

The protein belongs to the cycloisomerase 2 family.

The catalysed reaction is 6-phospho-D-glucono-1,5-lactone + H2O = 6-phospho-D-gluconate + H(+). Its pathway is carbohydrate degradation; pentose phosphate pathway; D-ribulose 5-phosphate from D-glucose 6-phosphate (oxidative stage): step 2/3. In terms of biological role, catalyzes the hydrolysis of 6-phosphogluconolactone to 6-phosphogluconate. The protein is 6-phosphogluconolactonase of Escherichia fergusonii (strain ATCC 35469 / DSM 13698 / CCUG 18766 / IAM 14443 / JCM 21226 / LMG 7866 / NBRC 102419 / NCTC 12128 / CDC 0568-73).